Here is a 349-residue protein sequence, read N- to C-terminus: Protein RecA (349 aa).

65 to 72 (GPESSGKT) lines the ATP pocket. Positions 329-349 (KASDQTAAHDETEEEPDLLES) are disordered. The span at 339 to 349 (ETEEEPDLLES) shows a compositional bias: acidic residues.

This sequence belongs to the RecA family.

Its subcellular location is the cytoplasm. Functionally, can catalyze the hydrolysis of ATP in the presence of single-stranded DNA, the ATP-dependent uptake of single-stranded DNA by duplex DNA, and the ATP-dependent hybridization of homologous single-stranded DNAs. It interacts with LexA causing its activation and leading to its autocatalytic cleavage. In Acinetobacter baylyi (strain ATCC 33305 / BD413 / ADP1), this protein is Protein RecA.